Reading from the N-terminus, the 138-residue chain is MPEKMQVLGSRKGLTPAVQNYTMVNVSDNSGAKEAMIISVFGYRGALRRVPYANVGDLVMVSVRKGAPDVRKQKFKAVVIRQRMPFRRPDGTWISFDDNAVVIVNPDGTAKGTEIRGPVAREAAERWPKVASLATLIV.

Belongs to the universal ribosomal protein uL14 family. Part of the 50S ribosomal subunit. Forms a cluster with proteins L3 and L24e, part of which may contact the 16S rRNA in 2 intersubunit bridges.

In terms of biological role, binds to 23S rRNA. Forms part of two intersubunit bridges in the 70S ribosome. This is Large ribosomal subunit protein uL14 from Metallosphaera sedula (strain ATCC 51363 / DSM 5348 / JCM 9185 / NBRC 15509 / TH2).